We begin with the raw amino-acid sequence, 99 residues long: Transcription and mRNA export factor SUS1 (99 aa).

Belongs to the ENY2 family. In terms of assembly, component of the nuclear pore complex (NPC)-associated TREX-2 complex (transcription and export complex 2), composed of at least SUS1, SAC3, THP1, SEM1, and CDC31. TREX-2 contains 2 SUS1 chains. The TREX-2 complex interacts with the nucleoporin NUP1. Component of the 1.8 MDa SAGA transcription coactivator-HAT complex. SAGA is built of 5 distinct domains with specialized functions. Within the SAGA complex, SUS1, SGF11, SGF73 and UBP8 form an additional subcomplex of SAGA called the DUB module (deubiquitination module). Interacts directly with THP1, SAC3, SGF11, and with the RNA polymerase II.

The protein localises to the nucleus. The protein resides in the nucleoplasm. Its subcellular location is the cytoplasm. It is found in the P-body. Its function is as follows. Involved in mRNA export coupled transcription activation by association with both the TREX-2 and the SAGA complexes. At the promoters, SAGA is required for recruitment of the basal transcription machinery. It influences RNA polymerase II transcriptional activity through different activities such as TBP interaction and promoter selectivity, interaction with transcription activators, and chromatin modification through histone acetylation and deubiquitination. Within the SAGA complex, participates in a subcomplex required for deubiquitination of H2B and for the maintenance of steady-state H3 methylation levels. The TREX-2 complex functions in docking export-competent ribonucleoprotein particles (mRNPs) to the nuclear entrance of the nuclear pore complex (nuclear basket). TREX-2 participates in mRNA export and accurate chromatin positioning in the nucleus by tethering genes to the nuclear periphery. May also be involved in cytoplasmic mRNA decay by interaction with components of P-bodies. In Eremothecium gossypii (strain ATCC 10895 / CBS 109.51 / FGSC 9923 / NRRL Y-1056) (Yeast), this protein is Transcription and mRNA export factor SUS1.